Consider the following 560-residue polypeptide: MVTWTQMYMPMGGLGLSALVALIPIIFFFVALAVLRLKGHVAGAITLILSILIAIFAFKMPIDMAFAAAGYGFIYGLWPIAWIIVAAVFLYKLTVASGQFDIIRSSVISITDDQRLQVLLIGFSFGALLEGAAGFGAPVAITGALLVGLGFKPLYAAGLCLIANTAPVAFGALGVPILVAGQVTGIDPFHIGAMAGRQLPFLSVLVPFWLVAMMDGWKGVKETWPAALVAGGSFAVTQFFTSNYIGPELPDITSALVSIVSLALFLKVWRPKNTETAISMGQSAGAMVVNKPSSGGPVPSEYSLGQIIRAWSPFLILTVLVTIWTMKPFKALFAPGGAFYSLVINFQIPHLHQQVLKAAPIVAQPTPMDAVFKFDPLSAGGTAIFIAAIISIFILGVGIKKGIGVFAETLISLKWPILSIGMVLAFAFVTNYSGMSTTLALVLAGTGVMFPFFSPFLGWLGVFLTGSDTSSNALFGSLQSTTAQQINVSDTLLVAANTSGGVTGKMISPQSIAVACAATGMVGRESELFRYTVKHSLIFASVIGIITLLQAYVFTGMLVS.

The Cytoplasmic segment spans residues Met-1–Gly-13. The chain crosses the membrane as a helical span at residues Leu-14 to Val-34. Residues Leu-35–Val-41 lie on the Periplasmic side of the membrane. The helical transmembrane segment at Ala-42–Ile-62 threads the bilayer. At Asp-63 to Ala-69 the chain is on the cytoplasmic side. Residues Gly-70–Leu-90 traverse the membrane as a helical segment. The Periplasmic portion of the chain corresponds to Tyr-91 to Glu-130. The helical transmembrane segment at Gly-131–Phe-151 threads the bilayer. Over Lys-152 to Gly-158 the chain is Cytoplasmic. Residues Leu-159–Val-179 form a helical membrane-spanning segment. The Periplasmic segment spans residues Ala-180–Leu-199. A helical transmembrane segment spans residues Pro-200 to Val-220. The Cytoplasmic portion of the chain corresponds to Lys-221–Pro-225. Residues Ala-226–Gly-246 form a helical membrane-spanning segment. At Pro-247 to Glu-248 the chain is on the periplasmic side. A helical membrane pass occupies residues Leu-249–Trp-269. Topologically, residues Arg-270–Pro-313 are cytoplasmic. Residues Phe-314–Ala-334 traverse the membrane as a helical segment. The Periplasmic portion of the chain corresponds to Pro-335 to Ser-378. A helical transmembrane segment spans residues Ala-379–Ile-399. The Cytoplasmic portion of the chain corresponds to Lys-400 to Glu-408. Residues Thr-409–Val-429 traverse the membrane as a helical segment. Topologically, residues Thr-430–Thr-438 are periplasmic. A helical transmembrane segment spans residues Leu-439 to Trp-459. Residues Leu-460–Ser-536 are Cytoplasmic-facing. A helical transmembrane segment spans residues Leu-537–Met-557. At Leu-558–Ser-560 the chain is on the periplasmic side.

It belongs to the lactate permease family.

The protein resides in the cell inner membrane. It carries out the reaction glycolate(in) + H(+)(in) = glycolate(out) + H(+)(out). The enzyme catalyses (S)-lactate(in) + H(+)(in) = (S)-lactate(out) + H(+)(out). The catalysed reaction is (R)-lactate(in) + H(+)(in) = (R)-lactate(out) + H(+)(out). Inhibited by the proton ionophore carbonyl cyanide m-chlorophenylhydrazone (CCCP). Functionally, uptake of glycolate across the membrane. Can also transport L-lactate and D-lactate. Seems to be driven by a proton motive force. The chain is Glycolate permease GlcA from Escherichia coli (strain K12).